Consider the following 473-residue polypeptide: C3a anaphylatoxin chemotactic receptor (473 aa).

Topologically, residues 1–23 are extracellular; it reads MESFTADTNSTDLHSRPLFKPQD. An N-linked (GlcNAc...) asparagine glycan is attached at asparagine 9. Residues 24-46 traverse the membrane as a helical segment; that stretch reads IASMVILSLTCLLGLPGNGLVLW. The Cytoplasmic segment spans residues 47–57; the sequence is VAGVKMKRTVN. The helical transmembrane segment at 58–80 threads the bilayer; the sequence is TVWFLHLTLADFLCCLSLPFSVA. The Extracellular portion of the chain corresponds to 81–96; the sequence is HLILRGHWPYGLFLCK. Residues cysteine 95 and cysteine 172 are joined by a disulfide bond. A helical transmembrane segment spans residues 97 to 118; sequence LIPSVIILNMFASVFLLTAISL. Over 119–139 the chain is Cytoplasmic; sequence DRCLMVHKPIWCQNHRSVRTA. Residues 140-160 form a helical membrane-spanning segment; sequence FAVCGCVWVVTFVMCIPVFVY. Over 161–329 the chain is Extracellular; it reads RDLLVVDDYS…TPQVAITISR (169 aa). 2 positions are modified to sulfotyrosine: tyrosine 174 and tyrosine 184. Asparagine 201 carries an N-linked (GlcNAc...) asparagine glycan. A disordered region spans residues 233–252; the sequence is FHTSPEDPFSQDSASQQPHY. Tyrosine 308 carries the post-translational modification Sulfotyrosine. The chain crosses the membrane as a helical span at residues 330-349; the sequence is LVVGFLVPFFIMITCYSLIV. Residues 350–366 lie on the Cytoplasmic side of the membrane; sequence FRMRKTNLTKSRNKTLR. Residues 367–389 form a helical membrane-spanning segment; that stretch reads VAVAVVTVFFVCWIPYHIVGILL. The Extracellular portion of the chain corresponds to 390–406; it reads VITDQESALREVVLPWD. The chain crosses the membrane as a helical span at residues 407–427; it reads HMSIALASANSCFNPFLYALL. Residues 428–473 are Cytoplasmic-facing; it reads GKDFRKKARQSVKGILEAAFSEELTHSTSCTQDKAPSKRNHMSTDV. Serine 448 carries the post-translational modification Phosphoserine. Threonine 452 carries the phosphothreonine modification.

This sequence belongs to the G-protein coupled receptor 1 family. In terms of assembly, interacts with VGF-derived peptide TLQP-21.

Its subcellular location is the cell membrane. Functionally, receptor for the chemotactic and inflammatory peptide anaphylatoxin C3a. This receptor stimulates chemotaxis, granule enzyme release and superoxide anion production. The chain is C3a anaphylatoxin chemotactic receptor (C3ar1) from Rattus norvegicus (Rat).